Here is a 304-residue protein sequence, read N- to C-terminus: UDP-3-O-acyl-N-acetylglucosamine deacetylase (304 aa).

The Zn(2+) site is built by H78, H237, and D241. H264 acts as the Proton donor in catalysis.

It belongs to the LpxC family. Zn(2+) is required as a cofactor.

The enzyme catalyses a UDP-3-O-[(3R)-3-hydroxyacyl]-N-acetyl-alpha-D-glucosamine + H2O = a UDP-3-O-[(3R)-3-hydroxyacyl]-alpha-D-glucosamine + acetate. It participates in glycolipid biosynthesis; lipid IV(A) biosynthesis; lipid IV(A) from (3R)-3-hydroxytetradecanoyl-[acyl-carrier-protein] and UDP-N-acetyl-alpha-D-glucosamine: step 2/6. Its function is as follows. Catalyzes the hydrolysis of UDP-3-O-myristoyl-N-acetylglucosamine to form UDP-3-O-myristoylglucosamine and acetate, the committed step in lipid A biosynthesis. In Xylella fastidiosa (strain 9a5c), this protein is UDP-3-O-acyl-N-acetylglucosamine deacetylase.